Here is a 729-residue protein sequence, read N- to C-terminus: uncharacterized protein (729 aa).

This is an uncharacterized protein from Caenorhabditis elegans.